A 921-amino-acid polypeptide reads, in one-letter code: uncharacterized protein (921 aa).

The interval 334 to 628 is kinase-like; it reads MTKRKFLSID…NLKSIYYDFF (295 aa). Low complexity predominate over residues 401-494; it reads GSSEWSFGSS…NNNNSDGSSG (94 aa). Disordered regions lie at residues 401–499 and 664–711; these read GSSE…DNRN and NLYS…NSNS.

This is an uncharacterized protein from Dictyostelium discoideum (Social amoeba).